The chain runs to 291 residues: MDKIIKSISTSGSFRAYVLDCTETVRTAQEKHQTLSSSTVALGRTLIANQILAANQKGNSKVTVKVIGDSSFGHIISVADTKGNVKGYIQNTGVDIKKTATGEVLVGPFMGNGHFVVITDYATGQPYTSTTPLITGEIGEDFAYYLTESEQTPSAVGLNVLLDDEDKVKVAGGFMLQVLPGASDEEISRYEKRIQEMPSISSLLESENHIESLLSAIYGEDDYKRLSEDSLAFYCDCSKERFEAALLTLGTKELQAMKDEDKGVEITCQFCNQTYYFTEEDLEKIINDSIK.

Cystine bridges form between Cys235–Cys237 and Cys268–Cys271.

It belongs to the HSP33 family. In terms of processing, under oxidizing conditions two disulfide bonds are formed involving the reactive cysteines. Under reducing conditions zinc is bound to the reactive cysteines and the protein is inactive.

The protein resides in the cytoplasm. Redox regulated molecular chaperone. Protects both thermally unfolding and oxidatively damaged proteins from irreversible aggregation. Plays an important role in the bacterial defense system toward oxidative stress. The sequence is that of 33 kDa chaperonin from Streptococcus agalactiae serotype III (strain NEM316).